We begin with the raw amino-acid sequence, 448 residues long: tRNA(Ile)-lysidine synthase (448 aa).

25–30 (SGGSDS) contributes to the ATP binding site.

This sequence belongs to the tRNA(Ile)-lysidine synthase family.

It is found in the cytoplasm. The catalysed reaction is cytidine(34) in tRNA(Ile2) + L-lysine + ATP = lysidine(34) in tRNA(Ile2) + AMP + diphosphate + H(+). Functionally, ligates lysine onto the cytidine present at position 34 of the AUA codon-specific tRNA(Ile) that contains the anticodon CAU, in an ATP-dependent manner. Cytidine is converted to lysidine, thus changing the amino acid specificity of the tRNA from methionine to isoleucine. In Brucella abortus (strain S19), this protein is tRNA(Ile)-lysidine synthase.